A 212-amino-acid chain; its full sequence is Probable 2-dehydro-3-deoxy-6-phosphogalactonate aldolase (212 aa).

Position 18 (arginine 18) interacts with 2-dehydro-3-deoxy-6-phospho-D-galactonate. The active-site Proton donor/acceptor is the glutamate 41. Threonine 70, lysine 130, glycine 160, glycine 180, and serine 181 together coordinate 2-dehydro-3-deoxy-6-phospho-D-galactonate. Lysine 130 serves as the catalytic Schiff-base intermediate with substrate.

Belongs to the KHG/KDPG aldolase family. In terms of assembly, homotrimer.

It catalyses the reaction 2-dehydro-3-deoxy-6-phospho-D-galactonate = D-glyceraldehyde 3-phosphate + pyruvate. Its pathway is carbohydrate acid metabolism; D-galactonate degradation; D-glyceraldehyde 3-phosphate and pyruvate from D-galactonate: step 3/3. Its function is as follows. Involved in the degradation of galactose via the DeLey-Doudoroff pathway. Catalyzes the reversible, stereospecific retro-aldol cleavage of 2-keto-3-deoxy-6-phosphogalactonate (KDPGal) to pyruvate and D-glyceraldehyde-3-phosphate. This Rhizobium meliloti (strain 1021) (Ensifer meliloti) protein is Probable 2-dehydro-3-deoxy-6-phosphogalactonate aldolase (dgoA).